Consider the following 843-residue polypeptide: Protein P (843 aa).

Positions 1 to 177 (MPLSYPHFRK…FCGSPYSWEQ (177 aa)) are terminal protein domain (TP). Residues 178–346 (ELQHGSTSLN…YCLSHIINLL (169 aa)) are spacer. 2 disordered regions span residues 228 to 259 (KQGQ…GVEP) and 283 to 314 (EKAN…SVGS). The segment covering 239–249 (RSGRLRSRVHT) has biased composition (basic residues). Positions 347–690 (EDWGPCYEHG…YMNLYPVARQ (344 aa)) are polymerase/reverse transcriptase domain (RT). Residues 357 to 600 (QHYIRTPRTP…YSLHFMGYVI (244 aa)) form the Reverse transcriptase domain. Residues Asp-429, Asp-551, and Asp-552 each contribute to the Mg(2+) site.

Belongs to the hepadnaviridae P protein family.

The catalysed reaction is DNA(n) + a 2'-deoxyribonucleoside 5'-triphosphate = DNA(n+1) + diphosphate. The enzyme catalyses Endonucleolytic cleavage to 5'-phosphomonoester.. With respect to regulation, activated by host HSP70 and HSP40 in vitro to be able to bind the epsilon loop of the pgRNA. Because deletion of the RNase H region renders the protein partly chaperone-independent, the chaperones may be needed indirectly to relieve occlusion of the RNA-binding site by this domain. Inhibited by several reverse-transcriptase inhibitors: Lamivudine, Adefovir and Entecavir. In terms of biological role, multifunctional enzyme that converts the viral RNA genome into dsDNA in viral cytoplasmic capsids. This enzyme displays a DNA polymerase activity that can copy either DNA or RNA templates, and a ribonuclease H (RNase H) activity that cleaves the RNA strand of RNA-DNA heteroduplexes in a partially processive 3'- to 5'-endonucleasic mode. Neo-synthesized pregenomic RNA (pgRNA) are encapsidated together with the P protein, and reverse-transcribed inside the nucleocapsid. Initiation of reverse-transcription occurs first by binding the epsilon loop on the pgRNA genome, and is initiated by protein priming, thereby the 5'-end of (-)DNA is covalently linked to P protein. Partial (+)DNA is synthesized from the (-)DNA template and generates the relaxed circular DNA (RC-DNA) genome. After budding and infection, the RC-DNA migrates in the nucleus, and is converted into a plasmid-like covalently closed circular DNA (cccDNA). The activity of P protein does not seem to be necessary for cccDNA generation, and is presumably released from (+)DNA by host nuclear DNA repair machinery. The sequence is that of Protein P from Homo sapiens (Human).